The primary structure comprises 643 residues: Leukocyte immunoglobulin-like receptor subfamily B member 5 (643 aa).

Residues 1–23 form the signal peptide; that stretch reads MTLTLSVLICLGLNVGPRTCVQA. At 24-458 the chain is on the extracellular side; it reads GTLPKPTLWA…PQSGLGRHLG (435 aa). Ig-like C2-type domains are found at residues 27–116, 111–228, 224–313, and 337–418; these read PKPT…LELV, DPLE…SLLI, PSLL…DPLD, and GENV…LVVS. A disulfide bridge links Cys49 with Cys98. The N-linked (GlcNAc...) asparagine glycan is linked to Asn139. Disulfide bonds link Cys144-Cys195 and Cys244-Cys295. 2 N-linked (GlcNAc...) asparagine glycosylation sites follow: Asn279 and Asn339. Cys344 and Cys395 are joined by a disulfide. Residues 417-433 are compositionally biased toward low complexity; sequence VSGPSGDPSLSPTGSTP. The tract at residues 417 to 449 is disordered; that stretch reads VSGPSGDPSLSPTGSTPTPGPEDQPLTPTGLDP. Residues 459–479 form a helical membrane-spanning segment; it reads VVTGVSVAFVLLLFLLLFLLL. The Cytoplasmic portion of the chain corresponds to 480 to 643; that stretch reads RHRHQSKHRT…PSIYAPLAIH (164 aa). Positions 493 to 643 are disordered; that stretch reads FYRPAGAAGP…PSIYAPLAIH (151 aa). Phosphoserine is present on Ser514. 3 stretches are compositionally biased toward basic and acidic residues: residues 531–549, 557–567, and 579–592; these read TQPKDGAEMDARQSPRDED, EVKHSRPRREM, and LDTKDTQAEEDRQM. The ITIM motif 1 motif lies at 605–610; the sequence is VTYAQL. The segment covering 615–631 has biased composition (basic and acidic residues); sequence LRREATEPPPSQEREPP. An ITIM motif 2 motif is present at residues 635 to 640; sequence SIYAPL.

The protein resides in the membrane. Functionally, may act as receptor for class I MHC antigens. This is Leukocyte immunoglobulin-like receptor subfamily B member 5 (LILRB5) from Pan troglodytes (Chimpanzee).